Reading from the N-terminus, the 505-residue chain is Aminoaldehyde dehydrogenase 2 (505 aa).

The Na(+) site is built by Ile-31 and Asp-99. NAD(+) contacts are provided by residues 159–161 (TPW) and 185–188 (KPSE). Residue Leu-189 participates in Na(+) binding. 238–242 (GSGPT) serves as a coordination point for NAD(+). Glu-260 serves as the catalytic Proton acceptor. Residue Leu-261 coordinates NAD(+). The active-site Nucleophile is the Cys-295. NAD(+) contacts are provided by Glu-394 and Trp-460.

It belongs to the aldehyde dehydrogenase family. In terms of assembly, forms homodimers.

The catalysed reaction is 4-aminobutanal + NAD(+) + H2O = 4-aminobutanoate + NADH + 2 H(+). It carries out the reaction 3-aminopropanal + NAD(+) + H2O = beta-alanine + NADH + 2 H(+). It catalyses the reaction 4-(trimethylamino)butanal + NAD(+) + H2O = 4-(trimethylamino)butanoate + NADH + 2 H(+). The enzyme catalyses 4-guanidinobutanal + NAD(+) + H2O = 4-guanidinobutanoate + NADH + 2 H(+). It participates in amine and polyamine biosynthesis; betaine biosynthesis via choline pathway; betaine from betaine aldehyde: step 1/1. Dehydrogenase that catalyzes the oxidation of several aminoaldehydes. Metabolizes and detoxifies aldehyde products of polyamine degradation to non-toxic amino acids. Catalyzes the oxidation of 4-aminobutanal and 3-aminopropanal to 4-aminobutanoate and beta-alanine, respectively. Catalyzes the oxidation of 4-(trimethylamino)butanal and 4-guanidinobutanal to 4-trimethylammoniobutanoate and 4-guanidinobutanoate, respectively. This is Aminoaldehyde dehydrogenase 2 from Solanum lycopersicum (Tomato).